A 387-amino-acid chain; its full sequence is Succinyl-diaminopimelate desuccinylase (387 aa).

H74 contacts Zn(2+). Residue D76 is part of the active site. D107 serves as a coordination point for Zn(2+). The active-site Proton acceptor is the E142. Zn(2+)-binding residues include E143, E171, and H360.

Belongs to the peptidase M20A family. DapE subfamily. Homodimer. Zn(2+) is required as a cofactor. Co(2+) serves as cofactor.

The catalysed reaction is N-succinyl-(2S,6S)-2,6-diaminopimelate + H2O = (2S,6S)-2,6-diaminopimelate + succinate. It participates in amino-acid biosynthesis; L-lysine biosynthesis via DAP pathway; LL-2,6-diaminopimelate from (S)-tetrahydrodipicolinate (succinylase route): step 3/3. Catalyzes the hydrolysis of N-succinyl-L,L-diaminopimelic acid (SDAP), forming succinate and LL-2,6-diaminopimelate (DAP), an intermediate involved in the bacterial biosynthesis of lysine and meso-diaminopimelic acid, an essential component of bacterial cell walls. In Rhodopseudomonas palustris (strain BisA53), this protein is Succinyl-diaminopimelate desuccinylase.